The sequence spans 1287 residues: DNA-directed RNA polymerase 147 kDa polypeptide (1287 aa).

This sequence belongs to the poxviridae DNA-directed RNA polymerase 147 kDa subunit family. In terms of assembly, the DNA-dependent RNA polymerase used for intermediate and late genes expression consists of eight subunits Rpo30/OPG66, Rpo7/OPG90, Rpo22/OPG103, Rpo147/OPG105, Rpo18/OPG119, Rpo19/OPG131, Rpo132/OPG151 and Rpo35/OPG156. The same holoenzyme, with the addition of the transcription-specificity factor OPG109, is used for early gene expression.

It localises to the virion. The catalysed reaction is RNA(n) + a ribonucleoside 5'-triphosphate = RNA(n+1) + diphosphate. In terms of biological role, part of the DNA-dependent RNA polymerase which catalyzes the transcription of viral DNA into RNA using the four ribonucleoside triphosphates as substrates. Responsible for the transcription of early, intermediate and late genes. DNA-dependent RNA polymerase associates with the early transcription factor (ETF), itself composed of OPG118 and OPG133, thereby allowing the early genes transcription. Late transcription, and probably also intermediate transcription, require newly synthesized RNA polymerase. This chain is DNA-directed RNA polymerase 147 kDa polypeptide (OPG105), found in Bos taurus (Bovine).